The following is a 213-amino-acid chain: Glycerol-3-phosphate acyltransferase (213 aa).

The next 5 helical transmembrane spans lie at 3 to 23 (ILLAALVAYLIGSVSFAVVVS), 51 to 71 (KAAILTLVGDAFKGWIAVWLA), 78 to 98 (DVAVAWVAIAVFLGHLYPVFF), 115 to 135 (AVHPVLGLATALTWLIVAFFF), and 140 to 160 (LAALVAAVFAPVFDVFLFGTP).

Belongs to the PlsY family. Probably interacts with PlsX.

It is found in the cell inner membrane. It catalyses the reaction an acyl phosphate + sn-glycerol 3-phosphate = a 1-acyl-sn-glycero-3-phosphate + phosphate. It functions in the pathway lipid metabolism; phospholipid metabolism. Its function is as follows. Catalyzes the transfer of an acyl group from acyl-phosphate (acyl-PO(4)) to glycerol-3-phosphate (G3P) to form lysophosphatidic acid (LPA). This enzyme utilizes acyl-phosphate as fatty acyl donor, but not acyl-CoA or acyl-ACP. The polypeptide is Glycerol-3-phosphate acyltransferase (Burkholderia cenocepacia (strain ATCC BAA-245 / DSM 16553 / LMG 16656 / NCTC 13227 / J2315 / CF5610) (Burkholderia cepacia (strain J2315))).